A 452-amino-acid polypeptide reads, in one-letter code: Heat shock protein 83 (452 aa).

Residue Arg124 participates in ATP binding. The TPR repeat-binding signature appears at 448–452 (MEQVD).

The protein belongs to the heat shock protein 90 family. Homodimer.

It localises to the cytoplasm. Its function is as follows. Molecular chaperone that promotes the maturation, structural maintenance and proper regulation of specific target proteins involved for instance in cell cycle control and signal transduction. Undergoes a functional cycle that is linked to its ATPase activity. This cycle probably induces conformational changes in the client proteins, thereby causing their activation. Interacts dynamically with various co-chaperones that modulate its substrate recognition, ATPase cycle and chaperone function. The sequence is that of Heat shock protein 83 (HSP83) from Leishmania donovani.